The sequence spans 198 residues: Probable chemoreceptor glutamine deamidase CheD (198 aa).

This sequence belongs to the CheD family.

The enzyme catalyses L-glutaminyl-[protein] + H2O = L-glutamyl-[protein] + NH4(+). In terms of biological role, probably deamidates glutamine residues to glutamate on methyl-accepting chemotaxis receptors (MCPs), playing an important role in chemotaxis. The protein is Probable chemoreceptor glutamine deamidase CheD of Xanthomonas axonopodis pv. citri (strain 306).